The chain runs to 341 residues: Phosphoribosylformylglycinamidine cyclo-ligase (341 aa).

It belongs to the AIR synthase family.

Its subcellular location is the cytoplasm. It catalyses the reaction 2-formamido-N(1)-(5-O-phospho-beta-D-ribosyl)acetamidine + ATP = 5-amino-1-(5-phospho-beta-D-ribosyl)imidazole + ADP + phosphate + H(+). Its pathway is purine metabolism; IMP biosynthesis via de novo pathway; 5-amino-1-(5-phospho-D-ribosyl)imidazole from N(2)-formyl-N(1)-(5-phospho-D-ribosyl)glycinamide: step 2/2. This chain is Phosphoribosylformylglycinamidine cyclo-ligase, found in Lachnospira eligens (strain ATCC 27750 / DSM 3376 / VPI C15-48 / C15-B4) (Eubacterium eligens).